The following is a 257-amino-acid chain: GTP cyclohydrolase III (257 aa).

The protein belongs to the archaeal-type GTP cyclohydrolase family.

It carries out the reaction GTP + 3 H2O = 2-amino-5-formylamino-6-(5-phospho-D-ribosylamino)pyrimidin-4(3H)-one + 2 phosphate + 2 H(+). Catalyzes the formation of 2-amino-5-formylamino-6-ribofuranosylamino-4(3H)-pyrimidinone ribonucleotide monophosphate and inorganic phosphate from GTP. Also has an independent pyrophosphate phosphohydrolase activity. This chain is GTP cyclohydrolase III, found in Halorubrum lacusprofundi (strain ATCC 49239 / DSM 5036 / JCM 8891 / ACAM 34).